The primary structure comprises 213 residues: Andrastin A biosynthesis cluster protein B (213 aa).

In terms of biological role, part of the gene cluster that mediates the biosynthesis of andrastins, meroterpenoid compounds that exhibit inhibitory activity against ras farnesyltransferase, suggesting that they could be promising leads for antitumor agents. The first step of the pathway is the synthesis of 3,5-dimethylorsellinic acid (DMOA) by the polyketide synthase adrD via condensation of one acetyl-CoA starter unit with 3 malonyl-CoA units and 2 methylations. DMAO is then converted to farnesyl-DMAO by the prenyltransferase adrG. The methyltransferase adrK catalyzes the methylation of the carboxyl group of farnesyl-DMAO to farnesyl-DMAO methyl ester which is further converted to epoxyfarnesyl-DMAO methyl ester by the FAD-dependent monooxygenase adrH. The terpene cyclase adrI then catalyzes the carbon skeletal rearrangement to generate the andrastin E, the first compound in the pathway having the andrastin scaffold, with the tetracyclic ring system. The post-cyclization tailoring enzymes adrF, adrE, adrJ, and adrA, are involved in the conversion of andrastin E into andrastin A. The short chain dehydrogenase adrF is responsible for the oxidation of the C-3 a hydroxyl group of andrastin E to yield the corresponding ketone, andrastin D. The ketoreductase adrE stereoselectively reduces the carbonyl moiety to reverse the stereochemistry of the C-3 position to yield andrastin F. The acetyltransferase adrJ is the acetyltransferase that attaches the acetyl group to the C-3 hydroxyl group of andrastin F to yield andrastin C. Finally, the cytochrome P450 monooxygenase adrA catalyzes two sequential oxidation reactions of the C-23 methyl group, to generate the corresponding alcohol andrastin B, and aldehyde andrastin A. The polypeptide is Andrastin A biosynthesis cluster protein B (Penicillium rubens (strain ATCC 28089 / DSM 1075 / NRRL 1951 / Wisconsin 54-1255) (Penicillium chrysogenum)).